The primary structure comprises 467 residues: Protein arginine methyltransferase NDUFAF7 homolog, mitochondrial (467 aa).

The protein belongs to the NDUFAF7 family.

It localises to the mitochondrion. It catalyses the reaction L-arginyl-[protein] + 2 S-adenosyl-L-methionine = N(omega),N(omega)'-dimethyl-L-arginyl-[protein] + 2 S-adenosyl-L-homocysteine + 2 H(+). Functionally, arginine methyltransferase involved in the assembly or stability of mitochondrial NADH:ubiquinone oxidoreductase complex (complex I). The polypeptide is Protein arginine methyltransferase NDUFAF7 homolog, mitochondrial (Schizosaccharomyces pombe (strain 972 / ATCC 24843) (Fission yeast)).